The primary structure comprises 108 residues: Replication initiation control protein YabA (108 aa).

Residues His83, Cys85, Cys99, and Cys102 each coordinate Zn(2+).

The protein belongs to the YabA family. As to quaternary structure, homotetramer. Interacts with both DnaA and DnaN, acting as a bridge between these two proteins. Requires Zn(2+) as cofactor.

The protein localises to the cytoplasm. It localises to the nucleoid. Functionally, involved in control of chromosome replication initiation. Inhibits the cooperative binding of DnaA to the oriC region, thus negatively regulating initiation of chromosome replication. Inhibits the ability of DnaA-ATP to form a helix on DNA; does not disassemble preformed DnaA-DNA helices. Decreases the residence time of DnaA on the chromosome at its binding sites (oriC, replication forks and promoter-binding sites). Tethers DnaA to the replication machinery via the DNA polymerase beta sliding clamp subunit (dnaN). Associates with oriC and other DnaA targets on the chromosome in a DnaA-dependent manner. This is Replication initiation control protein YabA from Lactococcus lactis subsp. lactis (strain IL1403) (Streptococcus lactis).